The chain runs to 563 residues: Testis-expressed basic protein 1 (563 aa).

The chain crosses the membrane as a helical span at residues 3–23; it reads VLEITLAVILTLLGLAILAIL. Residues 56 to 81 form a disordered region; sequence GSRHAYSTQSDTSYDNRERSKRDYTP. Residues 69–79 are compositionally biased toward basic and acidic residues; sequence YDNRERSKRDY. A helical membrane pass occupies residues 99–119; that stretch reads ELILLLMCFILALSRSSIGSI. The tract at residues 311-563 is disordered; that stretch reads SEMSIPQGQG…GRKYNKKVEE (253 aa). A compositionally biased stretch (basic and acidic residues) spans 367–383; sequence QVEKSEMGVPRRQESQV. Positions 384–395 are enriched in low complexity; it reads KKSQSGVSKGQE. 2 stretches are compositionally biased toward basic and acidic residues: residues 412–447 and 485–544; these read QVEK…KKSE and EAQE…EKSK.

The protein resides in the membrane. The chain is Testis-expressed basic protein 1 from Homo sapiens (Human).